The chain runs to 624 residues: MRQFLALAAAASIAVADSCHTFTLANSPPDDKAVALSSYSYCGGYLSASAFVKNLSYDKLVTLYWTNADNKSTPLNAGSLDYVKAASDDQSWELWSLNVTTVPDGVDALLNITYVAASIGKTNSQQLNVQVEATGDPIPTPQIPTIYKPYASPSDFSDDITNWLKPSNDSQTGIAKSFLFNNINIPGAAPGTVIAAQSYSEPDYAYTWVRDASLVMDVVNRLYSSAKSEEKRQLYEKILFQYAKAGAQEQNDPTAISGMGEPKFYLNNTAFTGSWGRPQNDGPATRAITLIEFANAYLANGGSQDTVREQLYDSDKYPQVAPIKKDLQFVASNWSSPSFDLWEEEESAHFYTRLVQRKALLLGADFANDMGDHELSDKLKTQASKLSDTLPEFWDSARQLILYEYGPVLRGKYSYKDISVVLGVMHGYANDNVFSYTNDQILATAYQVSTSFLDVYKVANTTSDESGKPLGIPVGRYPEDVYDGVGTSQGNPWYLTTMAMAEFLYRSVQEFEDAGSIIISDTSLPFWKYFASSVDHKAGAKYNKNDQSFKTSLKSLTGWGDAFMRRAKYHTPSSGHMSEEFNRTTGEPRGAKDLTWSYASLLSAAFAREELRNQKNYLTNVADL.

The N-terminal stretch at 1 to 18 is a signal peptide; the sequence is MRQFLALAAAASIAVADS. The region spanning 26–132 is the CBM21 domain; sequence NSPPDDKAVA…NSQQLNVQVE (107 aa). N-linked (GlcNAc...) asparagine glycosylation is found at Asn54, Asn70, Asn98, Asn111, Asn168, Asn267, and Asn333. The active-site Proton acceptor is the Asp340. Glu343 functions as the Proton donor in the catalytic mechanism. N-linked (GlcNAc...) asparagine glycans are attached at residues Asn460 and Asn582.

The protein belongs to the glycosyl hydrolase 15 family.

It catalyses the reaction Hydrolysis of terminal (1-&gt;4)-linked alpha-D-glucose residues successively from non-reducing ends of the chains with release of beta-D-glucose.. This Blastobotrys adeninivorans (Yeast) protein is Glucoamylase (GAA).